The chain runs to 217 residues: Adapter protein MecA (217 aa).

The protein belongs to the MecA family. Homodimer.

Its function is as follows. Enables the recognition and targeting of unfolded and aggregated proteins to the ClpC protease or to other proteins involved in proteolysis. The polypeptide is Adapter protein MecA (Listeria monocytogenes serovar 1/2a (strain ATCC BAA-679 / EGD-e)).